A 285-amino-acid chain; its full sequence is Ribosomal RNA small subunit methyltransferase I (285 aa).

This sequence belongs to the methyltransferase superfamily. RsmI family.

The protein localises to the cytoplasm. It carries out the reaction cytidine(1402) in 16S rRNA + S-adenosyl-L-methionine = 2'-O-methylcytidine(1402) in 16S rRNA + S-adenosyl-L-homocysteine + H(+). Its function is as follows. Catalyzes the 2'-O-methylation of the ribose of cytidine 1402 (C1402) in 16S rRNA. The chain is Ribosomal RNA small subunit methyltransferase I from Mycobacterium tuberculosis (strain ATCC 25618 / H37Rv).